Consider the following 486-residue polypeptide: Probable FAD-binding monooxygenase ltbD (486 aa).

The tract at residues 186-243 (PAGDGGTNDQGPSRAQSTASSGGSGRPRSTESPQSGAQASTTPTSPPTTQSTGDDPAA) is disordered. The segment covering 194 to 206 (DQGPSRAQSTASS) has biased composition (polar residues). Low complexity predominate over residues 220-241 (SGAQASTTPTSPPTTQSTGDDP).

Belongs to the FAD-binding monooxygenase family. In terms of assembly, homodimer. Requires FAD as cofactor.

Functionally, probable FAD-binding monooxygenase; part of the gene cluster that mediates the biosynthesis of luteodienoside A, a glycosylated polyketide consisting of an unusual 1-O-beta-D-glucopyranosyl-myo-inositol (glucinol) ester of 3-hydroxy-2,2,4-trimethylocta-4,6-dienoic acid. The HR-PKS ltbA produces the trimethylated polyketide chain from acetyl-CoA, malonyl-CoA and S-adenosylmethionine (SAM), and the ltbA cAT domain then uses glucinol produced by the glycosyltransferase ltbB as an offloading substrate to release luteodienoside A. Since ltbA and ltbB are sufficient for the biosynthesis of luteodienoside A, the functions of the methyltransferase ltbC and the FAD-binding monooxygenase ltbD within the pathway remain obscur. In Aspergillus luteorubrus, this protein is Probable FAD-binding monooxygenase ltbD.